Here is a 226-residue protein sequence, read N- to C-terminus: Cytidylate kinase (226 aa).

10–18 (GPASSGKST) contacts ATP.

The protein belongs to the cytidylate kinase family. Type 1 subfamily.

Its subcellular location is the cytoplasm. It catalyses the reaction CMP + ATP = CDP + ADP. It carries out the reaction dCMP + ATP = dCDP + ADP. The sequence is that of Cytidylate kinase from Streptococcus equi subsp. equi (strain 4047).